The primary structure comprises 364 residues: Delta(7)-sterol 5(6)-desaturase (364 aa).

Helical transmembrane passes span 94-114 (FFSL…ITAS), 142-162 (LAVS…MLEL), and 181-201 (KLLI…YLAH). The region spanning 188 to 312 (TFIFFTDCGI…FTTLWDRLGG (125 aa)) is the Fatty acid hydroxylase domain. Residues 201-205 (HRWLH) carry the Histidine box-1 motif. The Histidine box-2 signature appears at 214 to 218 (HKPHH). The helical transmembrane segment at 249-269 (ILPLHKISYLILFTFVNFWSV) threads the bilayer. Residues 289-293 (HTVHH) carry the Histidine box-3 motif.

It belongs to the sterol desaturase family. Fe cation is required as a cofactor.

Its subcellular location is the endoplasmic reticulum membrane. It carries out the reaction a Delta(7)-sterol + 2 Fe(II)-[cytochrome b5] + O2 + 2 H(+) = a Delta(5),Delta(7)-sterol + 2 Fe(III)-[cytochrome b5] + 2 H2O. It functions in the pathway steroid metabolism; ergosterol biosynthesis; ergosterol from zymosterol: step 3/5. Its function is as follows. Catalyzes the introduction of a C-5 double bond in the B ring of ergosterol. May contribute to the regulation of ergosterol biosynthesis. The chain is Delta(7)-sterol 5(6)-desaturase (ERG3) from Candida glabrata (strain ATCC 2001 / BCRC 20586 / JCM 3761 / NBRC 0622 / NRRL Y-65 / CBS 138) (Yeast).